The chain runs to 2443 residues: MSRDKPPQREVGGRRLPYEMGSLKFDEDPFRGQRRRPWMCFRIGYPTSEFSSEHFMKFVKRCHTSMIEVGILLDDEREFLQYQEVREDYLLLKKLIEEGLQKCETIYEKGPLSTPVVFFILDQCDEDEVQNMLDMFRESCYIFHMKRNEILNWINEMEYEELESDCSKFAQFIKGVENLTESIAMPMEVETEEFIFGKSSIVSTEDFVEDAPHKQIAQDQRETRPIRQPYSMVRNLAPPGLPPPGISISNSSPPGLSSVSPIPRADTRESRYSTPQPPGLSIPAPPGISLPTPPGISLQNHQNDQFEQAHSTISRMSENSSSSRRRFRDEEVQEEEGDHILSSEDVHAARNVCETKILVRGVPQKNDSELSKLINGSKLYVRFERPFVKLAHNLELLYVVNYAISSRKSIVRDHSKAIIRGLFEKDFLLKLKSKFLESSFDNDTWTPEGTELLFEIFHLFFTTARYKGGFMLTLPRFAPSWHDFSMAFDIADMDGLEEAGVGDDELRNLRRLIGYIETWIKRAERERNPSPLALRSYSVYEKAGSSDSGRQVLSESRGAGSSNVYGHDEVDFVDHRRRDEFGHRDNYRTENRRHKSPDNFGEVHRRLDEQQQQRHEDESSRYRDDSRQSRRADDRRDQYQYNESTSMENHLGFHNGGGTVSEHSRDDKFVSPQNCEEKRKYCEEDTDAKPQQPYRFEEIKFEPIWVKCEKSEPPEDFKTLPSVPVLSEYVNPVEPYLRRIQDDGKYKSVHHYLDVQFRLLKEDLVSPLRDGIDLYKKNGTCKGRRIEGAPCSDISIFNVEKVDGKQVTERDGYEMRIIWPAQYDILKLLDNDREMKELGLVMLSCDRFKEDFHLGHIQSSYLMRNGSLHFAVHEETSPFKPNTTYQMAQGTSYLPCYKHVLENLKRISSFKPLPFERYLVHGSKIIFRPNFQQAEKSEYQISEEKKLMKTYNELRSLAACARYTKGKPIPRGVDDDDEDYEFSKSRELSKEDIDLEYRQLQEPIFRPLVGVDIKDSNLIQINKKWYNVSRLLDEFHPDYMDESQRLAFCNTFKYELSLIQGPPGTGKTHIGVQIVKTILQNRSYWKITEPILVVCFTNSGLDNLLERIYQMIENDEELSKDNGRPKIIRFGSKCDSNYLKRQNVMRQDVYEQYKSKVSDGAQKKMSKAGAARRHKADNLAISSYTLFCSRNKLLSYEMLSRVMDPNHQMEIQQFTYDHVDTKGIPLSPDEAIGCWLLERDFGKATKSQTKKAKKPKFQGAQLDSEDENKDYFTVEDSDDEEDELDDEKLLDKLFEKMNLECSGADILSAVHASHADEYYTKGPWEIVQDKRPSVVVLMEKKTKPCNAKFTVDEQINNLVSEIKDMILSSQPVPKKDLNDIKYIFSLARLKRWSLYITWCDALRSIVTENLPRQIREYREACENFKNAQNRVDAEIMRMTMIIGATTTGCSRLRPTLEKVGPRILIVEEAAEVLEAHIISAMISTVEHVVMIGDHKQLRPNPAVHELGVAYGLRISMFERLVERGLPFSQLRQQHRMNLTISDKIVKLSFYDNVTDAENVGLYPDVQGMATNLFFWSHTSMEESPDEVSWLNKHEISMTVALVKHLLKQNYTTNDIVVLATYSAQKNLMYREYANVFGSTPDSNVIPVETVDSFQGKERKIVIVSLVRSHRGGRENTGIGFLAVANRICVALTRAQHGMYIIGNGAYIMNNSELWNKIVNNLRRSNLIEYNLPLKCVAHGNIVTVKDPQDFATKSPEGGCMQKCDTKKFCGHVCERLCHPNMEEEHLQRCLYNCDKKCSNPQFQHRCKKACYEECGSCLYLVEVTLDCGHRITTPCSRINSSKCDQSCTKKLLCGHACAAKCGEECTLVSECSQLVGMPLSCGHIKQLTCSKISANEIDLTCDQRCEKTMLACPHKCAEICGQPCTVECMEVVNVTLGCSHSQDVVCSSFMPGMTDHIECLTKVPKTLSPCKHTELVLCKQAPSTKLCTRRCTSYLEKCGHTCENDCGICFTTKTHICQNMCQKVLNCGHTCSAKCGESCPPCKAFCTNKCEHQSCGAGERGFGRDCSKLCALCVNNCSNKCAHRSCTLKCFEECNVKPCTEPCTDKLKCGHACLGICGEQCPKICGTCERNKYIECVSGTSSTSRVHRLIMIPKCYHVFPVEVLDDHVKKQKEANEKLKCPKCSAFIVGVLRYARYTKKYYLNENMRKLESNIRNIHQSTLEGRVFQAVQDSIGEIRNVTTNLTNASEDILRNFHQKILDIRTSAETFKGKPEHKFKFASLLQVANCCLAITRLLSVSSKFRVSRRKDIPPTFDLMSVRVLGDMPFPKLIDELNRVNIHLSNTYETFMPGAIIPKLKWLISRMTVLQQLTSMCHQLVLEKKDIADSDAHAINDACLNMFRYNEQHNYALNIENFEAIVVKVAPKLLEPTPKFWSWRRLQVPEL.

Disordered regions lie at residues 212–339, 545–566, and 583–672; these read PHKQ…EGDH, SSDS…NVYG, and HRDN…FVSP. Over residues 246-263 the composition is skewed to low complexity; that stretch reads ISISNSSPPGLSSVSPIP. Residues 275–294 show a composition bias toward pro residues; the sequence is PQPPGLSIPAPPGISLPTPP. A compositionally biased stretch (polar residues) spans 297–310; that stretch reads SLQNHQNDQFEQAH. Low complexity predominate over residues 311–322; sequence STISRMSENSSS. Polar residues predominate over residues 545–564; that stretch reads SSDSGRQVLSESRGAGSSNV. Basic and acidic residues-rich tracts occupy residues 601–638 and 662–672; these read GEVH…RRDQ and EHSRDDKFVSP. A UvrD-like helicase ATP-binding domain is found at 1040–1545; that stretch reads MDESQRLAFC…MNLTISDKIV (506 aa). Position 1061–1068 (1061–1068) interacts with ATP; that stretch reads GPPGTGKT. 4 NF-X1-type zinc fingers span residues 1769–1791, 1853–1873, 1912–1930, and 2027–2044; these read CGHV…RCLY, CGHA…ECSQ, CPHK…ECME, and CGHT…PCKA.

The protein belongs to the ZNFX1 family. In terms of assembly, interacts with ego-1, csr-1, wago-1 and prg-1. Interacts with wago-4; the interaction promotes the transmission of epigenetic information across generations. In terms of tissue distribution, expressed in germs cells. Not expressed in somatic tissues.

The protein localises to the cytoplasm. The protein resides in the perinuclear region. It localises to the cytoplasmic granule. It carries out the reaction ATP + H2O = ADP + phosphate + H(+). Functionally, epigenetic inheritance factor which, in association with the Argonaute protein wago-4, mediates small RNA-directed transgenerational epigenetic inheritance and thus balances the transgenerational inheritance of epigenetic information. Specifically, maintains a balanced production of small RNAs by preventing the spread of epigenetic signals towards the 5'-end of target mRNAs. Plays a role in small RNA-induced gene silencing in the germline. The polypeptide is NFX1-type zinc finger-containing protein 1 homolog (Caenorhabditis elegans).